We begin with the raw amino-acid sequence, 154 residues long: Myoglobin (154 aa).

One can recognise a Globin domain in the interval 2 to 148 (GLSDGEWQLV…FRKDMASNYK (147 aa)). Position 4 is a phosphoserine (S4). Position 65 (H65) interacts with nitrite. Residue H65 coordinates O2. Residue T68 is modified to Phosphothreonine. H94 contacts heme b.

It belongs to the globin family. As to quaternary structure, monomeric.

It localises to the cytoplasm. The protein resides in the sarcoplasm. It catalyses the reaction Fe(III)-heme b-[protein] + nitric oxide + H2O = Fe(II)-heme b-[protein] + nitrite + 2 H(+). The enzyme catalyses H2O2 + AH2 = A + 2 H2O. In terms of biological role, monomeric heme protein which primary function is to store oxygen and facilitate its diffusion within muscle tissues. Reversibly binds oxygen through a pentacoordinated heme iron and enables its timely and efficient release as needed during periods of heightened demand. Depending on the oxidative conditions of tissues and cells, and in addition to its ability to bind oxygen, it also has a nitrite reductase activity whereby it regulates the production of bioactive nitric oxide. Under stress conditions, like hypoxia and anoxia, it also protects cells against reactive oxygen species thanks to its pseudoperoxidase activity. This chain is Myoglobin, found in Homo sapiens (Human).